Consider the following 317-residue polypeptide: Adenosine receptor A3 (317 aa).

The Extracellular portion of the chain corresponds to 1-14; that stretch reads MPVNSTAVSLASVT. A glycan (N-linked (GlcNAc...) asparagine) is linked at N4. Residues 15-37 traverse the membrane as a helical segment; sequence YISVEILIGLCAIVGNVLVIWVV. Residues 38–48 lie on the Cytoplasmic side of the membrane; that stretch reads KLNPSLQTTTF. A helical membrane pass occupies residues 49-72; sequence YFIVSLALADIAVGVLVMPLAIVI. Over 73 to 84 the chain is Extracellular; that stretch reads SLGVTIHFYSCL. Cysteines 83 and 165 form a disulfide. The chain crosses the membrane as a helical span at residues 85-106; it reads LMTCLLMIFTHASIMSLLAIAV. Over 107–126 the chain is Cytoplasmic; it reads DRYLRVKLTVRYRRVTTQRR. The helical transmembrane segment at 127–148 threads the bilayer; the sequence is IWLALGLCWLVSFLVGLTPMFG. Over 149–176 the chain is Extracellular; the sequence is WNMKLSSADKNLTFLPCQFRSVMRMDYM. The chain crosses the membrane as a helical span at residues 177–197; that stretch reads VYFSFFTWILIPLVVMCAIYF. The Cytoplasmic portion of the chain corresponds to 198-230; that stretch reads DIFYVIRNRLSQNFSGSKETGAFYGREFKTAKS. A helical transmembrane segment spans residues 231–254; that stretch reads LSLVLFLFALSWLPLSIINCIIYF. Topologically, residues 255–260 are extracellular; the sequence is NGEVPQ. A helical transmembrane segment spans residues 261–283; sequence IVLYLGILLSHANSMMNPIVYAY. Topologically, residues 284–317 are cytoplasmic; the sequence is KIKKFKETYLLILKACVICQPSKSMDPSIEQTSE. Residue C302 is the site of S-palmitoyl cysteine attachment.

Belongs to the G-protein coupled receptor 1 family. Post-translationally, phosphorylation on Thr-315 and Ser-316 may be crucial for rapid desensitization. Phosphorylation on Thr-315 may be necessary for phosphorylation on Ser-316 to occur.

It localises to the cell membrane. Functionally, receptor for adenosine. The activity of this receptor is mediated by G proteins which inhibits adenylyl cyclase. This is Adenosine receptor A3 (ADORA3) from Bos taurus (Bovine).